A 444-amino-acid polypeptide reads, in one-letter code: Glutamyl-tRNA reductase (444 aa).

Substrate is bound by residues 49-52 (TCNR), Ser109, 114-116 (ETQ), and Gln120. The active-site Nucleophile is Cys50. An NADP(+)-binding site is contributed by 189-194 (GAGKMG).

This sequence belongs to the glutamyl-tRNA reductase family. In terms of assembly, homodimer.

The catalysed reaction is (S)-4-amino-5-oxopentanoate + tRNA(Glu) + NADP(+) = L-glutamyl-tRNA(Glu) + NADPH + H(+). Its pathway is porphyrin-containing compound metabolism; protoporphyrin-IX biosynthesis; 5-aminolevulinate from L-glutamyl-tRNA(Glu): step 1/2. Functionally, catalyzes the NADPH-dependent reduction of glutamyl-tRNA(Glu) to glutamate 1-semialdehyde (GSA). This chain is Glutamyl-tRNA reductase, found in Bacillus cereus (strain ATCC 14579 / DSM 31 / CCUG 7414 / JCM 2152 / NBRC 15305 / NCIMB 9373 / NCTC 2599 / NRRL B-3711).